A 737-amino-acid chain; its full sequence is Polyribonucleotide nucleotidyltransferase (737 aa).

Mg(2+) is bound by residues aspartate 489 and aspartate 495. The region spanning 556 to 615 (PKIDTIKIDVDKIKIVIGKGGETIDKIIAETGVKIDIDEEGNVSIYSSDQDAINRAKEII) is the KH domain. An S1 motif domain is found at 625-693 (DEVYRAKVVR…EKGRIDASMK (69 aa)). The tract at residues 691-737 (SMKALLPRPPKPEHDEKGEKSERPHRPRHHKDHKPKKEFTETPKDSE) is disordered. Over residues 700–714 (PKPEHDEKGEKSERP) the composition is skewed to basic and acidic residues. The span at 715-724 (HRPRHHKDHK) shows a compositional bias: basic residues. Residues 725–737 (PKKEFTETPKDSE) show a composition bias toward basic and acidic residues.

Belongs to the polyribonucleotide nucleotidyltransferase family. Mg(2+) is required as a cofactor.

The protein resides in the cytoplasm. The catalysed reaction is RNA(n+1) + phosphate = RNA(n) + a ribonucleoside 5'-diphosphate. Its function is as follows. Involved in mRNA degradation. Catalyzes the phosphorolysis of single-stranded polyribonucleotides processively in the 3'- to 5'-direction. This is Polyribonucleotide nucleotidyltransferase from Streptococcus pneumoniae (strain 70585).